The sequence spans 489 residues: FAD-linked oxidoreductase tazG (489 aa).

The first 17 residues, 1–17 (MVAFSAILQTALGLSAA), serve as a signal peptide directing secretion. An N-linked (GlcNAc...) asparagine glycan is attached at asparagine 38. The 170-residue stretch at 55–224 (APSYGAGAIK…TSATYRLPEV (170 aa)) folds into the FAD-binding PCMH-type domain. N-linked (GlcNAc...) asparagine glycosylation is found at asparagine 242 and asparagine 306.

This sequence belongs to the oxygen-dependent FAD-linked oxidoreductase family. It depends on FAD as a cofactor.

It functions in the pathway secondary metabolite biosynthesis. Functionally, FAD-linked oxidoreductase; part of the gene cluster that mediates the biosynthesis of azaterrilone A and other azaphilones, a class of fungal metabolites characterized by a highly oxygenated pyrano-quinone bicyclic core and exhibiting a broad range of bioactivities. The first step of the pathway begins with the non-reducing polyketide synthase tazA that assembles one acetyl-CoA starter unit, five malonyl-CoA units, and catalyzes a series of Claisen condensations, methylation, PT-mediated cyclization, and finally releases the first hexaketide precursor through the R-domain. The tazA product then undergoes reduction on its terminal ketone and the following pyran-ring formation by yet undetermined enzyme(s). Dehydration and enoyl reduction, possibly involving the trans-enoyl reductase tazE leads to the next intermediate. TazD is predicted as an acetyltransferase and might catalyze the acetylation steps leading to the synthesis of azaterrilone A. Azaterrilone A is not the final product of the taz pathway and both the highly reducing polyketide synthase tazB and the dual enzyme tazHJ catalyze late steps of the pathway, leading to the production of the 2 final stereoisomers that contain additional polyketide modification whose structures have still to be determined. This is FAD-linked oxidoreductase tazG from Aspergillus terreus (strain NIH 2624 / FGSC A1156).